Reading from the N-terminus, the 780-residue chain is Kazrin (780 aa).

Positions 79-261 (AQVLLREEVV…LATLTKDVPK (183 aa)) form a coiled coil. Positions 295–430 (QQTLYHSHPP…TRHSLSLSEG (136 aa)) are disordered. Residues Ser-357, Ser-372, and Ser-392 each carry the phosphoserine modification. Polar residues predominate over residues 416-427 (SQCSPTRHSLSL). SAM domains are found at residues 451-516 (WKAG…YRDA), 529-593 (DHHW…LYQV), and 617-684 (WTNQ…STVF). Residues 692 to 780 (IRESERFGTP…EYSSLEVTNV (89 aa)) form a disordered region. Over residues 760 to 771 (LQGRPEQCRLEE) the composition is skewed to basic and acidic residues.

Belongs to the kazrin family.

It localises to the cell junction. Its subcellular location is the nucleus. It is found in the cytoplasm. The protein resides in the cytoskeleton. Functionally, component of the cornified envelope of keratinocytes. May be involved in the interplay between adherens junctions and desmosomes. The function in the nucleus is not known. The polypeptide is Kazrin (Kazn) (Rattus norvegicus (Rat)).